A 633-amino-acid chain; its full sequence is Chaperone protein HtpG (633 aa).

Residues 1–341 (MTAPHETMSF…SADLPLNVSR (341 aa)) are a; substrate-binding. The interval 342-562 (ELLQESRDVK…EGDMSGYLQR (221 aa)) is b. Residues 563–633 (LLKQAGQKAP…YVQRVNKLLA (71 aa)) are c.

It belongs to the heat shock protein 90 family. In terms of assembly, homodimer.

Its subcellular location is the cytoplasm. Functionally, molecular chaperone. Has ATPase activity. The protein is Chaperone protein HtpG of Cupriavidus necator (strain ATCC 17699 / DSM 428 / KCTC 22496 / NCIMB 10442 / H16 / Stanier 337) (Ralstonia eutropha).